A 476-amino-acid chain; its full sequence is Amino acid permease 3 (476 aa).

Over 1–33 the chain is Cytoplasmic; the sequence is MVQNHQTVLAVDMPQTGGSKYLDDDGKNKRTGS. A helical membrane pass occupies residues 34-54; sequence VWTASAHIITAVIGSGVLSLA. At 55 to 57 the chain is on the extracellular side; sequence WAT. A helical transmembrane segment spans residues 58 to 78; the sequence is AQLGWLAGPVVMLLFSAVTYF. The Cytoplasmic segment spans residues 79–122; that stretch reads TSSLLAACYRSGDPISGKRNYTYMDAVRSNLGGVKVTLCGIVQY. The helical transmembrane segment at 123–143 threads the bilayer; the sequence is LNIFGVAIGYTIASAISMMAI. Over 144–166 the chain is Extracellular; the sequence is KRSNCFHKSGGKDPCHMNSNPYM. A run of 2 helical transmembrane segments spans residues 167-187 and 188-208; these read IAFGLVQILFSQIPDFDQLWW and LSILAAVMSFTYSSAGLALGI. At 209–277 the chain is on the extracellular side; it reads AQVVVNGKVK…EEKTMKKATL (69 aa). A helical transmembrane segment spans residues 278–298; that stretch reads VSVSVTTMFYMLCGCMGYAAF. The Cytoplasmic portion of the chain corresponds to 299–300; it reads GD. The chain crosses the membrane as a helical span at residues 301–321; sequence LSPGNLLTGFGFYNPYWLLDI. Topologically, residues 322 to 324 are extracellular; the sequence is ANA. A helical transmembrane segment spans residues 325–345; it reads AIVIHLIGAYQVYCQPLFAFI. Over 346–384 the chain is Cytoplasmic; it reads EKQASIQFPDSEFIAKDIKIPIPGFKPLRLNVFRLIWRT. 2 consecutive transmembrane segments (helical) span residues 385–405 and 406–426; these read VFVIITTVISMLLPFFNDVVG and LLGALGFWPLTVYFPVEMYIA. The Cytoplasmic segment spans residues 427–441; it reads QKKIPRWSTRWVCLQ. A helical transmembrane segment spans residues 442-462; that stretch reads VFSLGCLVVSIAAAAGSIAGV. Residues 463-476 are Extracellular-facing; it reads LLDLKSYKPFRSEY.

The protein belongs to the amino acid/polyamine transporter 2 family. Amino acid/auxin permease (AAAP) (TC 2.A.18.2) subfamily. In terms of tissue distribution, expressed in the root phloem. Detected in stamens, in cotyledons, and in major veins of mature leaves.

Its subcellular location is the cell membrane. It is found in the nucleus membrane. It localises to the endomembrane system. Inhibited by carbonylcyanide m-chlorophenylhydrazone and 2,4-dinitrophenol. Functionally, amino acid-proton symporter. Stereospecific transporter with a broad specificity for GABA, tryptophan and both neutral and basic amino acids. High affinity transport of cationic amino acids. The sequence is that of Amino acid permease 3 (AAP3) from Arabidopsis thaliana (Mouse-ear cress).